The chain runs to 398 residues: Na(+)/H(+) antiporter NhaA (398 aa).

12 consecutive transmembrane segments (helical) span residues 8–28, 59–79, 96–116, 124–144, 154–174, 177–197, 202–222, 223–243, 261–281, 292–312, 328–348, and 362–382; these read FLQLEAASGIILFFTAVLALI, LLLWINDGLMAIFFLLVGMEI, LPVIAAIGGMIVPAAMFSFII, AGWAIPMATDIAFALGVLSLL, VFLLALAIIDDLGAIMVIALF, AELHTIPLLFAVALSAMLLML, VMLLTPYLIVGALLWLAVLKS, GVHATIAGVILGFAIPHIRGA, YFILPFFAFANAGLSFSGLSW, IIVGLFIGKPLGVMLVSWLAV, LFGLSVLCGIGFTMSIFIGGL, and LGILFGSLIAAVFGYILLRNA.

This sequence belongs to the NhaA Na(+)/H(+) (TC 2.A.33) antiporter family.

The protein resides in the cell inner membrane. The catalysed reaction is Na(+)(in) + 2 H(+)(out) = Na(+)(out) + 2 H(+)(in). In terms of biological role, na(+)/H(+) antiporter that extrudes sodium in exchange for external protons. The sequence is that of Na(+)/H(+) antiporter NhaA from Tolumonas auensis (strain DSM 9187 / NBRC 110442 / TA 4).